Here is a 285-residue protein sequence, read N- to C-terminus: Probable nudix hydrolase C6G9.05 (285 aa).

The 141-residue stretch at 114–254 (TRFASVLMPL…DLLYVEFNID (141 aa)) folds into the Nudix hydrolase domain. The Nudix box signature appears at 153–175 (GRVEPSDGSHYYAALRETYEEIG). Positions 169 and 173 each coordinate Mg(2+).

The protein belongs to the Nudix hydrolase family. PCD1 subfamily. Requires Mn(2+) as cofactor. It depends on Mg(2+) as a cofactor.

Probably mediates the hydrolysis of some nucleoside diphosphate derivatives. In Schizosaccharomyces pombe (strain 972 / ATCC 24843) (Fission yeast), this protein is Probable nudix hydrolase C6G9.05.